A 469-amino-acid chain; its full sequence is Glutamate-1-semialdehyde 2,1-aminomutase, chloroplastic (469 aa).

The transit peptide at 1 to 34 directs the protein to the chloroplast; that stretch reads MAGAAAAVASGISIRPVAAPKISRAPRSRSVVRA. Lys-309 is subject to N6-(pyridoxal phosphate)lysine.

The protein belongs to the class-III pyridoxal-phosphate-dependent aminotransferase family. HemL subfamily. In terms of assembly, homodimer. Pyridoxal 5'-phosphate serves as cofactor.

It is found in the plastid. It localises to the chloroplast. The catalysed reaction is (S)-4-amino-5-oxopentanoate = 5-aminolevulinate. It participates in porphyrin-containing compound metabolism; protoporphyrin-IX biosynthesis; 5-aminolevulinate from L-glutamyl-tRNA(Glu): step 2/2. The protein operates within porphyrin-containing compound metabolism; chlorophyll biosynthesis. The protein is Glutamate-1-semialdehyde 2,1-aminomutase, chloroplastic (GSA) of Hordeum vulgare (Barley).